We begin with the raw amino-acid sequence, 192 residues long: Crossover junction endodeoxyribonuclease RuvC (192 aa).

Catalysis depends on residues aspartate 8, glutamate 67, and aspartate 139. Mg(2+) is bound by residues aspartate 8, glutamate 67, and aspartate 139.

This sequence belongs to the RuvC family. Homodimer which binds Holliday junction (HJ) DNA. The HJ becomes 2-fold symmetrical on binding to RuvC with unstacked arms; it has a different conformation from HJ DNA in complex with RuvA. In the full resolvosome a probable DNA-RuvA(4)-RuvB(12)-RuvC(2) complex forms which resolves the HJ. The cofactor is Mg(2+).

It is found in the cytoplasm. The catalysed reaction is Endonucleolytic cleavage at a junction such as a reciprocal single-stranded crossover between two homologous DNA duplexes (Holliday junction).. In terms of biological role, the RuvA-RuvB-RuvC complex processes Holliday junction (HJ) DNA during genetic recombination and DNA repair. Endonuclease that resolves HJ intermediates. Cleaves cruciform DNA by making single-stranded nicks across the HJ at symmetrical positions within the homologous arms, yielding a 5'-phosphate and a 3'-hydroxyl group; requires a central core of homology in the junction. The consensus cleavage sequence is 5'-(A/T)TT(C/G)-3'. Cleavage occurs on the 3'-side of the TT dinucleotide at the point of strand exchange. HJ branch migration catalyzed by RuvA-RuvB allows RuvC to scan DNA until it finds its consensus sequence, where it cleaves and resolves the cruciform DNA. This chain is Crossover junction endodeoxyribonuclease RuvC, found in Haemophilus ducreyi (strain 35000HP / ATCC 700724).